Reading from the N-terminus, the 699-residue chain is Polyribonucleotide nucleotidyltransferase (699 aa).

Residues aspartate 484 and aspartate 490 each coordinate Mg(2+). The KH domain occupies 551 to 610; sequence PRITTIQVKPDQVRTVIGPGGKNVRGIIEATGCAIDIEDDGRINIASADGDACKAAIKMI. The S1 motif domain occupies 620–688; that stretch reads GKLYMATVKK…RQGKIKLSRK (69 aa).

This sequence belongs to the polyribonucleotide nucleotidyltransferase family. Mg(2+) is required as a cofactor.

Its subcellular location is the cytoplasm. The catalysed reaction is RNA(n+1) + phosphate = RNA(n) + a ribonucleoside 5'-diphosphate. In terms of biological role, involved in mRNA degradation. Catalyzes the phosphorolysis of single-stranded polyribonucleotides processively in the 3'- to 5'-direction. The sequence is that of Polyribonucleotide nucleotidyltransferase from Syntrophotalea carbinolica (strain DSM 2380 / NBRC 103641 / GraBd1) (Pelobacter carbinolicus).